The sequence spans 179 residues: MYEYLDRRYALALYEVAEEKNKVEEYLNDLREICEIIYGNNELYEVIKHPQISTVRKKKTFRNIFEGKIDDELLSFLMVLIEKDRILYLREKLKEMEKIHLERNNTLLAEVKSVVPLTEDEVTRLVEKLENKYSKKILLKQEIDRSIIGGLYVRVGDDVIDGTVKSRLDDMKQIMLKRE.

It belongs to the ATPase delta chain family. In terms of assembly, F-type ATPases have 2 components, F(1) - the catalytic core - and F(0) - the membrane proton channel. F(1) has five subunits: alpha(3), beta(3), gamma(1), delta(1), epsilon(1). F(0) has three main subunits: a(1), b(2) and c(10-14). The alpha and beta chains form an alternating ring which encloses part of the gamma chain. F(1) is attached to F(0) by a central stalk formed by the gamma and epsilon chains, while a peripheral stalk is formed by the delta and b chains.

Its subcellular location is the cell membrane. F(1)F(0) ATP synthase produces ATP from ADP in the presence of a proton or sodium gradient. F-type ATPases consist of two structural domains, F(1) containing the extramembraneous catalytic core and F(0) containing the membrane proton channel, linked together by a central stalk and a peripheral stalk. During catalysis, ATP synthesis in the catalytic domain of F(1) is coupled via a rotary mechanism of the central stalk subunits to proton translocation. In terms of biological role, this protein is part of the stalk that links CF(0) to CF(1). It either transmits conformational changes from CF(0) to CF(1) or is implicated in proton conduction. This chain is ATP synthase subunit delta, found in Clostridium perfringens (strain SM101 / Type A).